The chain runs to 237 residues: Ubiquinone biosynthesis O-methyltransferase (237 aa).

Positions 38, 58, 79, and 124 each coordinate S-adenosyl-L-methionine.

It belongs to the methyltransferase superfamily. UbiG/COQ3 family.

It carries out the reaction a 3-demethylubiquinol + S-adenosyl-L-methionine = a ubiquinol + S-adenosyl-L-homocysteine + H(+). The enzyme catalyses a 3-(all-trans-polyprenyl)benzene-1,2-diol + S-adenosyl-L-methionine = a 2-methoxy-6-(all-trans-polyprenyl)phenol + S-adenosyl-L-homocysteine + H(+). Its pathway is cofactor biosynthesis; ubiquinone biosynthesis. Functionally, O-methyltransferase that catalyzes the 2 O-methylation steps in the ubiquinone biosynthetic pathway. This is Ubiquinone biosynthesis O-methyltransferase from Acinetobacter baumannii (strain SDF).